Here is a 301-residue protein sequence, read N- to C-terminus: MQTTRSTRLLSLARRFVHTRTASQSAQNSKGMASGAESISGKEKTTHFGFQTVRESEKEQKVHEVFEQVANSYDVMNDAMSLGIHRVWKDVFVERLGPTHGMRLLDMAGGTGDITFRYLRYLNNQPNPQQRPSHVTVSDINQHMLNVGEERAKRLGLTTDQLSNCTVAWQCADAEKLPFPDASFTAYTIAFGIRNCTHVDKVLSEAYRVLQPGGRFMCLEFSHLTNETMQWLYDQYSFQVIPPMGQLLAGQWQAYQYLVESIRRFPKQEQFKQMIEQAGFDQVSYENLTFGVVSIHSGFKL.

The transit peptide at 1–16 directs the protein to the mitochondrion; sequence MQTTRSTRLLSLARRF. Polar residues predominate over residues 20 to 31; the sequence is RTASQSAQNSKG. Residues 20–44 form a disordered region; the sequence is RTASQSAQNSKGMASGAESISGKEK. S-adenosyl-L-methionine contacts are provided by residues threonine 111, aspartate 139, and 173–174; that span reads DA.

This sequence belongs to the class I-like SAM-binding methyltransferase superfamily. MenG/UbiE family. In terms of assembly, component of a multi-subunit COQ enzyme complex.

It is found in the mitochondrion inner membrane. The catalysed reaction is a 2-methoxy-6-(all-trans-polyprenyl)benzene-1,4-diol + S-adenosyl-L-methionine = a 5-methoxy-2-methyl-3-(all-trans-polyprenyl)benzene-1,4-diol + S-adenosyl-L-homocysteine + H(+). It participates in cofactor biosynthesis; ubiquinone biosynthesis. Its function is as follows. Methyltransferase required for the conversion of 2-polyprenyl-6-methoxy-1,4-benzoquinol (DDMQH2) to 2-polyprenyl-3-methyl-6-methoxy-1,4-benzoquinol (DMQH2). In Drosophila melanogaster (Fruit fly), this protein is 2-methoxy-6-polyprenyl-1,4-benzoquinol methylase, mitochondrial.